We begin with the raw amino-acid sequence, 463 residues long: Fumarate hydratase class II (463 aa).

Substrate is bound by residues 98–100 (SGT), 129–132 (HPND), 139–141 (SSN), and Thr187. His188 (proton donor/acceptor) is an active-site residue. The active site involves Ser318. Residues Ser319 and 324-326 (KVN) each bind substrate.

It belongs to the class-II fumarase/aspartase family. Fumarase subfamily. In terms of assembly, homotetramer.

The protein resides in the cytoplasm. The enzyme catalyses (S)-malate = fumarate + H2O. It participates in carbohydrate metabolism; tricarboxylic acid cycle; (S)-malate from fumarate: step 1/1. Its function is as follows. Involved in the TCA cycle. Catalyzes the stereospecific interconversion of fumarate to L-malate. The protein is Fumarate hydratase class II of Caulobacter vibrioides (strain ATCC 19089 / CIP 103742 / CB 15) (Caulobacter crescentus).